Here is a 407-residue protein sequence, read N- to C-terminus: Carbamoyl phosphate synthase small chain (407 aa).

The tract at residues 1–203 (MSQNESGTIA…EPCGEYEGKE (203 aa)) is CPSase. L-glutamine contacts are provided by serine 61, glycine 255, and glycine 257. The region spanning 207 to 405 (TVAAVDLGIK…CELMKNNSKE (199 aa)) is the Glutamine amidotransferase type-1 domain. The active-site Nucleophile is cysteine 283. L-glutamine contacts are provided by phenylalanine 284, glutamine 287, asparagine 325, glycine 327, and phenylalanine 328. Active-site residues include histidine 378 and glutamate 380.

It belongs to the CarA family. In terms of assembly, composed of two chains; the small (or glutamine) chain promotes the hydrolysis of glutamine to ammonia, which is used by the large (or ammonia) chain to synthesize carbamoyl phosphate. Tetramer of heterodimers (alpha,beta)4.

The catalysed reaction is hydrogencarbonate + L-glutamine + 2 ATP + H2O = carbamoyl phosphate + L-glutamate + 2 ADP + phosphate + 2 H(+). It catalyses the reaction L-glutamine + H2O = L-glutamate + NH4(+). It participates in amino-acid biosynthesis; L-arginine biosynthesis; carbamoyl phosphate from bicarbonate: step 1/1. The protein operates within pyrimidine metabolism; UMP biosynthesis via de novo pathway; (S)-dihydroorotate from bicarbonate: step 1/3. Its function is as follows. Small subunit of the glutamine-dependent carbamoyl phosphate synthetase (CPSase). CPSase catalyzes the formation of carbamoyl phosphate from the ammonia moiety of glutamine, carbonate, and phosphate donated by ATP, constituting the first step of 2 biosynthetic pathways, one leading to arginine and/or urea and the other to pyrimidine nucleotides. The small subunit (glutamine amidotransferase) binds and cleaves glutamine to supply the large subunit with the substrate ammonia. The sequence is that of Carbamoyl phosphate synthase small chain from Bifidobacterium longum (strain NCC 2705).